A 269-amino-acid chain; its full sequence is tRNA (guanine-N(1)-)-methyltransferase (269 aa).

Residues Gly-115 and 139–144 each bind S-adenosyl-L-methionine; that span reads LGDYVL.

This sequence belongs to the RNA methyltransferase TrmD family. In terms of assembly, homodimer.

It is found in the cytoplasm. The enzyme catalyses guanosine(37) in tRNA + S-adenosyl-L-methionine = N(1)-methylguanosine(37) in tRNA + S-adenosyl-L-homocysteine + H(+). In terms of biological role, specifically methylates guanosine-37 in various tRNAs. The sequence is that of tRNA (guanine-N(1)-)-methyltransferase from Pseudarthrobacter chlorophenolicus (strain ATCC 700700 / DSM 12829 / CIP 107037 / JCM 12360 / KCTC 9906 / NCIMB 13794 / A6) (Arthrobacter chlorophenolicus).